A 152-amino-acid polypeptide reads, in one-letter code: MAGLPRRIIKETQRLLAEPVPGIKAEPDESNARYFHVVIAGPQDSPFEGGTFKLELFLPEEYPMAAPKVRFMTKIYHPNVDKLGRICLDILKDKWSPALQIRTVLLSIQALLSAPNPDDPLANDVAEQWKTNEAQAIETARAWTRLYAMNNI.

One can recognise a UBC core domain in the interval 3 to 149 (GLPRRIIKET…ARAWTRLYAM (147 aa)). Lys-82 is subject to N6-acetyllysine. The Glycyl thioester intermediate role is filled by Cys-87. A Glycyl lysine isopeptide (Lys-Gly) (interchain with G-Cter in ISG15) cross-link involves residue Lys-92.

The protein belongs to the ubiquitin-conjugating enzyme family. Heterodimer with UBE2V2. Interacts (UBE2V2-UBE2N heterodimer) with the E3 ligase STUB1 (via the U-box domain); the complex has a specific 'Lys-63'-linked polyubiquitination activity. Interacts with RNF8 and RNF168. Interacts with RNF11. Interacts with the E3 ligases, HLTF and SHPRH; the interactions promote the 'Lys-63'-linked polyubiquitination of PCNA upon genotoxic stress and lead to DNA repair. Interacts with ARIH2 (via RING-type 2). Interacts with OTUB1; leading to inhibit E2-conjugating activity. Interacts with GPS2; leading to inhibit E2-conjugating activity. Interacts with RIGI and RNF135; involved in RIGI ubiquitination and activation. In terms of processing, conjugation to ISG15 impairs formation of the thioester bond with ubiquitin but not interaction with UBE2V2.

The enzyme catalyses S-ubiquitinyl-[E1 ubiquitin-activating enzyme]-L-cysteine + [E2 ubiquitin-conjugating enzyme]-L-cysteine = [E1 ubiquitin-activating enzyme]-L-cysteine + S-ubiquitinyl-[E2 ubiquitin-conjugating enzyme]-L-cysteine.. The protein operates within protein modification; protein ubiquitination. Activity is inhibited by binding to OTUB1, which prevents 'Lys-63'-linked polyubiquitination. Activity is inhibited by GPS2, leading to prevent 'Lys-63'-linked polyubiquitination. The UBE2V1-UBE2N and UBE2V2-UBE2N heterodimers catalyze the synthesis of non-canonical 'Lys-63'-linked polyubiquitin chains. This type of polyubiquitination does not lead to protein degradation by the proteasome. Mediates transcriptional activation of target genes. Plays a role in the control of progress through the cell cycle and differentiation. Plays a role in the error-free DNA repair pathway and contributes to the survival of cells after DNA damage. Acts together with the E3 ligases, HLTF and SHPRH, in the 'Lys-63'-linked poly-ubiquitination of PCNA upon genotoxic stress, which is required for DNA repair. Appears to act together with E3 ligase RNF5 in the 'Lys-63'-linked polyubiquitination of JKAMP thereby regulating JKAMP function by decreasing its association with components of the proteasome and ERAD. Promotes TRIM5 capsid-specific restriction activity and the UBE2V1-UBE2N heterodimer acts in concert with TRIM5 to generate 'Lys-63'-linked polyubiquitin chains which activate the MAP3K7/TAK1 complex which in turn results in the induction and expression of NF-kappa-B and MAPK-responsive inflammatory genes. Together with RNF135 and UB2V1, catalyzes the viral RNA-dependent 'Lys-63'-linked polyubiquitination of RIGI to activate the downstream signaling pathway that leads to interferon beta production. UBE2V1-UBE2N together with TRAF3IP2 E3 ubiquitin ligase mediate 'Lys-63'-linked polyubiquitination of TRAF6, a component of IL17A-mediated signaling pathway. The sequence is that of Ubiquitin-conjugating enzyme E2 N (UBE2N) from Bos taurus (Bovine).